Here is a 305-residue protein sequence, read N- to C-terminus: Aspartate carbamoyltransferase catalytic subunit (305 aa).

Carbamoyl phosphate-binding residues include R53 and T54. Position 82 (K82) interacts with L-aspartate. Carbamoyl phosphate contacts are provided by R103, H131, and Q134. The L-aspartate site is built by R164 and R226. 2 residues coordinate carbamoyl phosphate: L265 and P266.

This sequence belongs to the aspartate/ornithine carbamoyltransferase superfamily. ATCase family. As to quaternary structure, heterooligomer of catalytic and regulatory chains.

It carries out the reaction carbamoyl phosphate + L-aspartate = N-carbamoyl-L-aspartate + phosphate + H(+). It functions in the pathway pyrimidine metabolism; UMP biosynthesis via de novo pathway; (S)-dihydroorotate from bicarbonate: step 2/3. Functionally, catalyzes the condensation of carbamoyl phosphate and aspartate to form carbamoyl aspartate and inorganic phosphate, the committed step in the de novo pyrimidine nucleotide biosynthesis pathway. This chain is Aspartate carbamoyltransferase catalytic subunit, found in Ignicoccus hospitalis (strain KIN4/I / DSM 18386 / JCM 14125).